We begin with the raw amino-acid sequence, 674 residues long: Membrane-anchored lipid-binding protein LAM5 (674 aa).

2 disordered regions span residues 1–52 and 65–151; these read MSDV…LNTE and NQSA…GSPL. At 1–633 the chain is on the cytoplasmic side; it reads MSDVDNWEPV…AEQQGLKVTM (633 aa). A compositionally biased stretch (basic and acidic residues) spans 69–81; that stretch reads ADEHPTEIKHDQS. Residues 82–119 show a composition bias toward low complexity; the sequence is RTSSTSSFFSGMISSFKSNVPSPVSRSTTPTSPVSQPS. Thr-110 carries the post-translational modification Phosphothreonine. Phosphoserine is present on residues Ser-113 and Ser-140. A Phosphothreonine modification is found at Thr-143. Phosphoserine is present on Ser-149. The 67-residue stretch at 198-264 folds into the GRAM domain; sequence KDFHETFKSV…FEDVTFMEKT (67 aa). A compositionally biased stretch (acidic residues) spans 336-357; the sequence is IDEENNDKDANDNDTNENDDEN. Residues 336–380 are disordered; that stretch reads IDEENNDKDANDNDTNENDDENISTNETTPNSTSSSPDKEKEKAY. Residues 358–371 show a composition bias toward low complexity; it reads ISTNETTPNSTSSS. The region spanning 409–582 is the VASt domain; the sequence is NEFVLKELPF…ILSKFIKNNV (174 aa). A helical transmembrane segment spans residues 634 to 654; the sequence is ETWLFLYLIVVVLLLFNLFYI. Over 655–674 the chain is Lumenal; the sequence is RSIAVSLHQLVKLQLVELKL.

It belongs to the YSP2 family.

It localises to the endoplasmic reticulum membrane. In terms of biological role, may be involved in sterol transfer between intracellular membranes. In Saccharomyces cerevisiae (strain ATCC 204508 / S288c) (Baker's yeast), this protein is Membrane-anchored lipid-binding protein LAM5.